A 256-amino-acid polypeptide reads, in one-letter code: tRNA pseudouridine synthase A (256 aa).

The active-site Nucleophile is D52. A substrate-binding site is contributed by Y110.

The protein belongs to the tRNA pseudouridine synthase TruA family. In terms of assembly, homodimer.

The catalysed reaction is uridine(38/39/40) in tRNA = pseudouridine(38/39/40) in tRNA. In terms of biological role, formation of pseudouridine at positions 38, 39 and 40 in the anticodon stem and loop of transfer RNAs. The polypeptide is tRNA pseudouridine synthase A (Stenotrophomonas maltophilia (strain K279a)).